Consider the following 204-residue polypeptide: Small ribosomal subunit protein uS4 (204 aa).

Residues 94–157 form the S4 RNA-binding domain; it reads RRLDNVVYRL…KKLEVFKENL (64 aa).

It belongs to the universal ribosomal protein uS4 family. Part of the 30S ribosomal subunit. Contacts protein S5. The interaction surface between S4 and S5 is involved in control of translational fidelity.

Functionally, one of the primary rRNA binding proteins, it binds directly to 16S rRNA where it nucleates assembly of the body of the 30S subunit. In terms of biological role, with S5 and S12 plays an important role in translational accuracy. In Sulfurihydrogenibium sp. (strain YO3AOP1), this protein is Small ribosomal subunit protein uS4.